A 1008-amino-acid polypeptide reads, in one-letter code: Retinoblastoma-related protein (1008 aa).

A disordered region spans residues 375-394 (KRKVDSMTSPTKTITSPLSP). The segment covering 380–392 (SMTSPTKTITSPL) has biased composition (polar residues). A domain A region spans residues 404-605 (TPVSTAMTTA…EKGSSMYNSL (202 aa)). Positions 404–853 (TPVSTAMTTA…NEVFIPSVKP (450 aa)) are pocket. A spacer region spans residues 606 to 722 (TIARPNLSNE…HPTRGETCGE (117 aa)). Positions 723-853 (TAVNLFFSKI…NEVFIPSVKP (131 aa)) are domain B. 2 disordered regions span residues 865 to 899 (KNPN…SLPD) and 988 to 1008 (LQNG…LKTE).

The protein belongs to the retinoblastoma protein (RB) family.

Its subcellular location is the nucleus. In terms of biological role, regulator of biological processes that recruits a histone deacetylase to control gene transcription. May play a role in the entry into mitosis, negatively regulating the cell proliferation. Formation of stable complexes with geminiviridae replication-associated proteins may create a cellular environment which favors viral DNA replication. This Pilosella officinarum (Mouse-ear hawkweed) protein is Retinoblastoma-related protein (RBR).